We begin with the raw amino-acid sequence, 405 residues long: S-arrestin (405 aa).

Threonine 234 bears the Phosphothreonine mark.

It belongs to the arrestin family. In terms of assembly, monomer. Homodimer. Homotetramer. Interacts with RHO (via the phosphorylated C-terminus).

The protein localises to the cell projection. Its subcellular location is the cilium. It is found in the photoreceptor outer segment. It localises to the membrane. Functionally, binds to photoactivated, phosphorylated RHO and terminates RHO signaling via G-proteins by competing with G-proteins for the same binding site on RHO. May play a role in preventing light-dependent degeneration of retinal photoreceptor cells. This is S-arrestin (SAG) from Canis lupus familiaris (Dog).